We begin with the raw amino-acid sequence, 282 residues long: Pantothenate synthetase (282 aa).

ATP is bound at residue 30 to 37 (MGYYHAGH). Catalysis depends on His37, which acts as the Proton donor. Gln61 lines the (R)-pantoate pocket. Gln61 lines the beta-alanine pocket. 147–150 (GQKD) contributes to the ATP binding site. (R)-pantoate is bound at residue Gln153. ATP-binding positions include Val176 and 184 to 187 (LSSR).

This sequence belongs to the pantothenate synthetase family. Homodimer.

It localises to the cytoplasm. It carries out the reaction (R)-pantoate + beta-alanine + ATP = (R)-pantothenate + AMP + diphosphate + H(+). The protein operates within cofactor biosynthesis; (R)-pantothenate biosynthesis; (R)-pantothenate from (R)-pantoate and beta-alanine: step 1/1. Its function is as follows. Catalyzes the condensation of pantoate with beta-alanine in an ATP-dependent reaction via a pantoyl-adenylate intermediate. The sequence is that of Pantothenate synthetase from Desulfovibrio desulfuricans (strain ATCC 27774 / DSM 6949 / MB).